Reading from the N-terminus, the 1825-residue chain is Proteasome activator complex subunit 4B (1825 aa).

HEAT repeat units follow at residues 458 to 502, 981 to 1020, 1162 to 1200, 1336 to 1374, 1618 to 1656, and 1662 to 1700; these read PEGP…LVDC, NFCC…NHCG, YPLP…QLKR, DAFL…GSKH, PEQI…YNLF, and EQCV…CNFL. Residues 1632 to 1720 are bromodomain-like (BRDL); sequence AGSSSWHARY…EALCKTRLPK (89 aa).

Belongs to the BLM10 family. In terms of assembly, homodimer. Interacts with the 20S and 26S proteasomes.

It is found in the cytoplasm. Its subcellular location is the cytosol. The protein localises to the nucleus. It localises to the nucleus speckle. In terms of biological role, associated component of the proteasome that specifically recognizes acetylated histones and promotes ATP- and ubiquitin-independent degradation of core histones during DNA damage response. Recognizes and binds acetylated histones via its bromodomain-like (BRDL) region and activates the proteasome by opening the gated channel for substrate entry. Binds to the core proteasome via its C-terminus, which occupies the same binding sites as the proteasomal ATPases, opening the closed structure of the proteasome via an active gating mechanism. involved in DNA damage response in somatic cells: binds to acetylated histones and promotes degradation of histones. The protein is Proteasome activator complex subunit 4B (psme4b) of Danio rerio (Zebrafish).